We begin with the raw amino-acid sequence, 88 residues long: uncharacterized protein (88 aa).

The signal sequence occupies residues 1–22; sequence MGLTLKEHAEVCMALAESSASA.

This is an uncharacterized protein from Haemophilus influenzae (strain ATCC 51907 / DSM 11121 / KW20 / Rd).